We begin with the raw amino-acid sequence, 346 residues long: Cyclic GMP-AMP synthase-like protein (346 aa).

ATP-binding positions include S58 and 70 to 72 (EFD). 3 residues coordinate Mg(2+): E70, D72, and D165. GTP is bound by residues D165 and 212–219 (MVCAPHWE). ATP contacts are provided by residues 216–219 (PHWE), K237, and 252–256 (SYMLK).

Belongs to the mab-21 family. The cofactor is Mg(2+). Mn(2+) serves as cofactor.

Its activity is regulated as follows. Activated in response of some unknown stimulus. Not activated in response to L-monocytogenes infection. Functionally, probable nucleotidyltransferase that catalyzes the formation of cyclic dinucleotide second messenger in response to some unknown stimulus. Does not catalyze the formation of cyclic GMP-AMP from ATP and GTP. The chain is Cyclic GMP-AMP synthase-like protein from Drosophila melanogaster (Fruit fly).